Here is a 361-residue protein sequence, read N- to C-terminus: Peptide chain release factor 1 (361 aa).

An N5-methylglutamine modification is found at Gln237. A compositionally biased stretch (basic and acidic residues) spans 287 to 297; the sequence is KQQKEQSDTRK. The tract at residues 287 to 313 is disordered; that stretch reads KQQKEQSDTRKSLVGSGDRSERIRTYN.

Belongs to the prokaryotic/mitochondrial release factor family. Methylated by PrmC. Methylation increases the termination efficiency of RF1.

The protein localises to the cytoplasm. Peptide chain release factor 1 directs the termination of translation in response to the peptide chain termination codons UAG and UAA. This Francisella tularensis subsp. novicida (strain U112) protein is Peptide chain release factor 1.